Here is a 1754-residue protein sequence, read N- to C-terminus: MAPYPCGCHILLLLFCCLAAARANLLNLNWLWFNNEDTSHAATTIPEPQGPLPVQPTADTTTHVTPRNGSTEPATAPGSPEPPSELLEDGQDTPTSAESPDAPEENIAGVGAEILNVAKGIRSFVQLWNDTVPTESLARAETLVLETPVGPLALAGPSSTPQENGTTLWPSRGIPSSPGAHTTEAGTLPAPTPSPPSLGRPWAPLTGPSVPPPSSGRASLSSLLGGAPPWGSLQDPDSQGLSPAAAAPSQQLQRPDVRLRTPLLHPLVMGSLGKHAAPSAFSSGLPGALSQVAVTTLTRDSGAWVSHVANSVGPGLANNSALLGADPEAPAGRCLPLPPSLPVCGHLGISRFWLPNHLHHESGEQVRAGARAWGGLLQTHCHPFLAWFFCLLLVPPCGSVPPPAPPPCCQFCEALQDACWSRLGGGRLPVACASLPTQEDGYCVLIGPAAERISEEVGLLQLLGDPPPQQVTQTDDPDVGLAYVFGPDANSGQVARYHFPSLFFRDFSLLFHIRPATEGPGVLFAITDSAQAMVLLGVKLSGVQDGHQDISLLYTEPGAGQTHTAASFRLPAFVGQWTHLALSVAGGFVALYVDCEEFQRMPLARSSRGLELEPGAGLFVAQAGGADPDKFQGVIAELKVRRDPQVSPMHCLDEEGDDSDGASGDSGSGLGDARELLREETGAALKPRLPAPPPVTTPPLAGGSSTEDSRSEEVEEQTTVASLGAQTLPGSDSVSTWDGSVRTPGGRVKEGGLKGQKGEPGVPGPPGRAGPPGSPCLPGPPGLPCPVSPLGPAGPALQTVPGPQGPPGPPGRDGTPGRDGEPGDPGEDGKPGDTGPQGFPGTPGDVGPKGDKGDPGVGERGPPGPQGPPGPPGPSFRHDKLTFIDMEGSGFGGDLEALRGPRGFPGPPGPPGVPGLPGEPGRFGVNSSDVPGPAGLPGVPGREGPPGFPGLPGPPGPPGREGPPGRTGQKGSLGEAGAPGHKGSKGAPGPAGARGESGLAGAPGPAGPPGPPGPPGPPGPGLPAGFDDMEGSGGPFWSTARSADGPQGPPGLPGLKGDPGVPGLPGAKGEVGADGVPGFPGLPGREGIAGPQGPKGDRGSRGEKGDPGKDGVGQPGLPGPPGPPGPVVYVSEQDGSVLSVPGPEGRPGFAGFPGPAGPKGNLGSKGERGSPGPKGEKGEPGSIFSPDGGALGPAQKGAKGEPGFRGPPGPYGRPGYKGEIGFPGRPGRPGMNGLKGEKGEPGDASLGFGMRGMPGPPGPPGPPGPPGTPVYDSNVFAESSRPGPPGLPGNQGPPGPKGAKGEVGPPGPPGQFPFDFLQLEAEMKGEKGDRGDAGQKGERGEPGGGGFFGSSLPGPPGPPGPPGPRGYPGIPGPKGESIRGQPGPPGPQGPPGIGYEGRQGPPGPPGPPGPPSFPGPHRQTISVPGPPGPPGPPGPPGTMGASSGVRLWATRQAMLGQVHEVPEGWLIFVAEQEELYVRVQNGFRKVQLEARTPLPRGTDNEVAALQPPVVQLHDSNPYPRREHPHPTARPWRADDILASPPRLPEPQPYPGAPHHSSYVHLRPARPTSPPAHSHRDFQPVLHLVALNSPLSGGMRGIRGADFQCFQQARAVGLAGTFRAFLSSRLQDLYSIVRRADRAAVPIVNLKDELLFPSWEALFSGSEGPLKPGARIFSFDGKDVLRHPTWPQKSVWHGSDPNGRRLTESYCETWRTEAPSATGQASSLLGGRLLGQSAASCHHAYIVLCIENSFMTASK.

A signal peptide spans 1 to 23 (MAPYPCGCHILLLLFCCLAAARA). The disordered stretch occupies residues 42 to 104 (ATTIPEPQGP…TSAESPDAPE (63 aa)). A compositionally biased stretch (polar residues) spans 57 to 73 (TADTTTHVTPRNGSTEP). Residues Asn-68, Asn-129, and Asn-164 are each glycosylated (N-linked (GlcNAc...) asparagine). The interval 152 to 256 (LALAGPSSTP…APSQQLQRPD (105 aa)) is disordered. Over residues 157-169 (PSSTPQENGTTLW) the composition is skewed to polar residues. Residues 215-253 (SGRASLSSLLGGAPPWGSLQDPDSQGLSPAAAAPSQQLQ) are compositionally biased toward low complexity. In terms of domain architecture, FZ spans 329–446 (APAGRCLPLP…TQEDGYCVLI (118 aa)). Intrachain disulfides connect Cys-334-Cys-397, Cys-344-Cys-390, Cys-381-Cys-419, Cys-408-Cys-443, and Cys-412-Cys-432. Residues 456–644 (EVGLLQLLGD…IAELKVRRDP (189 aa)) form the Laminin G-like domain. The interval 645–751 (QVSPMHCLDE…RTPGGRVKEG (107 aa)) is nonhelical region 1 (NC1). The interval 645–1443 (QVSPMHCLDE…GPPGTMGASS (799 aa)) is disordered. Positions 672 to 681 (DARELLREET) are enriched in basic and acidic residues. Thr-696 bears the Phosphothreonine mark. The segment covering 717–738 (QTTVASLGAQTLPGSDSVSTWD) has biased composition (polar residues). Residues 752–785 (GLKGQKGEPGVPGPPGRAGPPGSPCLPGPPGLPC) form a triple-helical region 1 (COL1) region. Pro residues predominate over residues 762–789 (VPGPPGRAGPPGSPCLPGPPGLPCPVSP). The nonhelical region 2 (NC2) stretch occupies residues 786 to 795 (PVSPLGPAGP). Residues 796-875 (ALQTVPGPQG…QGPPGPPGPS (80 aa)) form a triple-helical region 2 (COL2) region. Over residues 815-831 (TPGRDGEPGDPGEDGKP) the composition is skewed to basic and acidic residues. Residues 833 to 846 (DTGPQGFPGTPGDV) show a composition bias toward low complexity. Pro residues predominate over residues 862–874 (PPGPQGPPGPPGP). Residues 876–899 (FRHDKLTFIDMEGSGFGGDLEALR) are nonhelical region 3 (NC3). O-linked (Xyl...) (chondroitin sulfate) serine glycosylation occurs at Ser-889. A triple-helical region 3 (COL3) region spans residues 900–1021 (GPRGFPGPPG…PGPPGPPGPG (122 aa)). The span at 904-914 (FPGPPGPPGVP) shows a compositional bias: pro residues. An N-linked (GlcNAc...) asparagine glycan is attached at Asn-926. Low complexity predominate over residues 930–942 (VPGPAGLPGVPGR). Pro residues predominate over residues 946 to 961 (PGFPGLPGPPGPPGRE). Over residues 976 to 1003 (AGAPGHKGSKGAPGPAGARGESGLAGAP) the composition is skewed to low complexity. Residues 1005–1021 (PAGPPGPPGPPGPPGPG) show a composition bias toward pro residues. The interval 1022–1044 (LPAGFDDMEGSGGPFWSTARSAD) is nonhelical region 4 (NC4). The triple-helical region 4 (COL4) stretch occupies residues 1045 to 1127 (GPQGPPGLPG…PGPPGPPGPV (83 aa)). A compositionally biased stretch (low complexity) spans 1053–1065 (PGLKGDPGVPGLP). The span at 1095 to 1109 (KGDRGSRGEKGDPGK) shows a compositional bias: basic and acidic residues. Residues 1117 to 1126 (LPGPPGPPGP) show a composition bias toward pro residues. The nonhelical region 5 (NC5) stretch occupies residues 1128-1141 (VYVSEQDGSVLSVP). A compositionally biased stretch (low complexity) spans 1141 to 1153 (PGPEGRPGFAGFP). The segment at 1142–1183 (GPEGRPGFAGFPGPAGPKGNLGSKGERGSPGPKGEKGEPGSI) is triple-helical region 5 (COL5). Positions 1184–1196 (FSPDGGALGPAQK) are nonhelical region 6 (NC6). A triple-helical region 6 (COL6) region spans residues 1197–1269 (GAKGEPGFRG…PGPPGPPGTP (73 aa)). Positions 1254-1268 (PGPPGPPGPPGPPGT) are enriched in pro residues. The segment at 1270–1279 (VYDSNVFAES) is nonhelical region 7 (NC7). Residues 1280 to 1312 (SRPGPPGLPGNQGPPGPKGAKGEVGPPGPPGQF) form a triple-helical region 7 (COL7) region. The span at 1282–1296 (PGPPGLPGNQGPPGP) shows a compositional bias: pro residues. The segment at 1313-1324 (PFDFLQLEAEMK) is nonhelical region 8 (NC8). Positions 1321 to 1341 (AEMKGEKGDRGDAGQKGERGE) are enriched in basic and acidic residues. Residues 1325-1346 (GEKGDRGDAGQKGERGEPGGGG) form a triple-helical region 8 (COL8) region. Positions 1330–1332 (RGD) match the Cell attachment site motif. Positions 1347–1353 (FFGSSLP) are nonhelical region 9 (NC9). 3 stretches are compositionally biased toward pro residues: residues 1353–1365 (PGPP…PGPR), 1401–1414 (PPGP…PSFP), and 1424–1436 (PGPP…PGPP). A triple-helical region 9 (COL9) region spans residues 1354–1411 (GPPGPPGPPGPRGYPGIPGPKGESIRGQPGPPGPQGPPGIGYEGRQGPPGPPGPPGPP). The nonhelical region 10 (NC10) stretch occupies residues 1412 to 1424 (SFPGPHRQTISVP). The interval 1425-1442 (GPPGPPGPPGPPGTMGAS) is triple-helical region 10 (COL10). Residues 1443-1754 (SGVRLWATRQ…IENSFMTASK (312 aa)) form a nonhelical region 11 (NC11) region. The interval 1456-1501 (GQVHEVPEGWLIFVAEQEELYVRVQNGFRKVQLEARTPLPRGTDNE) is non-collagenous domain 1 association domain. Residues 1502 to 1571 (VAALQPPVVQ…RPARPTSPPA (70 aa)) are non-collagenous domain 1 hinge region. A disordered region spans residues 1511-1556 (QLHDSNPYPRREHPHPTARPWRADDILASPPRLPEPQPYPGAPHHS). A compositionally biased stretch (basic and acidic residues) spans 1519–1535 (PRREHPHPTARPWRADD). Over residues 1541 to 1551 (PRLPEPQPYPG) the composition is skewed to pro residues. O-linked (GalNAc...) threonine glycosylation occurs at Thr-1567. Positions 1572, 1574, 1582, and 1647 each coordinate Zn(2+). Cystine bridges form between Cys-1604–Cys-1744 and Cys-1706–Cys-1736.

Belongs to the multiplexin collagen family. In terms of assembly, forms homotrimers. Recombinant non-collagenous domain 1 has stronger affinity to NID1, HSPG2 and laminin-1:NID1 complex and lower affinity to FBLN1 and FBLN2 than endostatin. Monomeric. Interacts with KDR/VEGFR2. Interacts with the ITGA5:ITGB1 complex. Interacts with NID1, HSPG2, laminin-1:NID1 complex, FBLN1 and FBLN2. Prolines at the third position of the tripeptide repeating unit (G-X-Y) of the triple-helical regions are hydroxylated. In terms of processing, circulating endostatins are found as sialoglycoprotein and asialoglycoprotein structures. Post-translationally, undergoes proteolytic processing by CTSL/cathepsin-L and elastase-like proteases to generate both non-collagenous domain 1 trimers and endostatin monomers. In tissue extracts (brain, skeletal muscle, heart, kidney, testis and liver) predominantly bands of approximately 38 kDa are detected; recombinant non-collagenous domain 1 shows similar mobility. In vitro, several proteolytic cleavage sites in the non-collagenous domain 1 hinge region generating different endostatin-like peptides are reported. Detected in placenta (at protein level). Present in multiple organs with highest levels in liver, lung and kidney.

The protein localises to the secreted. Its subcellular location is the extracellular space. It localises to the extracellular matrix. The protein resides in the basement membrane. Probably plays a major role in determining the retinal structure as well as in the closure of the neural tube. Its function is as follows. May regulate extracellular matrix-dependent motility and morphogenesis of endothelial and non-endothelial cells; the function requires homotrimerization and implicates MAPK signaling. In terms of biological role, potently inhibits endothelial cell proliferation and angiogenesis. May inhibit angiogenesis by binding to the heparan sulfate proteoglycans involved in growth factor signaling. Inhibits VEGFA-induced endothelial cell proliferation and migration. Seems to inhibit VEGFA-mediated signaling by blocking the interaction of VEGFA to its receptor KDR/VEGFR2. Modulates endothelial cell migration in an integrin-dependent manner implicating integrin ITGA5:ITGB1 and to a lesser extent ITGAV:ITGB3 and ITGAV:ITGB5. May negatively regulate the activity of homotrimeric non-collagenous domain 1. The polypeptide is Collagen alpha-1(XVIII) chain (Homo sapiens (Human)).